A 232-amino-acid chain; its full sequence is Phosphatidylserine decarboxylase proenzyme (232 aa).

S190 serves as the catalytic Schiff-base intermediate with substrate; via pyruvic acid. S190 carries the post-translational modification Pyruvic acid (Ser); by autocatalysis.

This sequence belongs to the phosphatidylserine decarboxylase family. PSD-A subfamily. Heterodimer of a large membrane-associated beta subunit and a small pyruvoyl-containing alpha subunit. Requires pyruvate as cofactor. Post-translationally, is synthesized initially as an inactive proenzyme. Formation of the active enzyme involves a self-maturation process in which the active site pyruvoyl group is generated from an internal serine residue via an autocatalytic post-translational modification. Two non-identical subunits are generated from the proenzyme in this reaction, and the pyruvate is formed at the N-terminus of the alpha chain, which is derived from the carboxyl end of the proenzyme. The post-translation cleavage follows an unusual pathway, termed non-hydrolytic serinolysis, in which the side chain hydroxyl group of the serine supplies its oxygen atom to form the C-terminus of the beta chain, while the remainder of the serine residue undergoes an oxidative deamination to produce ammonia and the pyruvoyl prosthetic group on the alpha chain.

It localises to the cell membrane. It catalyses the reaction a 1,2-diacyl-sn-glycero-3-phospho-L-serine + H(+) = a 1,2-diacyl-sn-glycero-3-phosphoethanolamine + CO2. It functions in the pathway phospholipid metabolism; phosphatidylethanolamine biosynthesis; phosphatidylethanolamine from CDP-diacylglycerol: step 2/2. Catalyzes the formation of phosphatidylethanolamine (PtdEtn) from phosphatidylserine (PtdSer). The chain is Phosphatidylserine decarboxylase proenzyme from Bartonella bacilliformis (strain ATCC 35685 / KC583 / Herrer 020/F12,63).